Reading from the N-terminus, the 561-residue chain is Arginine--tRNA ligase (561 aa).

Residues 129-139 (ANPTGPLHVGH) carry the 'HIGH' region motif.

It belongs to the class-I aminoacyl-tRNA synthetase family. In terms of assembly, monomer.

It is found in the cytoplasm. It catalyses the reaction tRNA(Arg) + L-arginine + ATP = L-arginyl-tRNA(Arg) + AMP + diphosphate. The sequence is that of Arginine--tRNA ligase from Bordetella bronchiseptica (strain ATCC BAA-588 / NCTC 13252 / RB50) (Alcaligenes bronchisepticus).